The following is a 479-amino-acid chain: MKVLFVASECAPFVKTGGLADVIGAVPKALAPLGVEARVMLPLYPALRVLSEGGKTVWSSDNLHGGAARLLDVRAEGLDLLLLDAPHLFDRGGNIYLDADGTDWPDNPLRFGALSWVAADIAANGAAGWQPEIVHAHDWQAGLVPAYLHQMDAPKPPCVLTIHNIAFQGLFSPDLMAPLGLDAALYTQDGMEFYGNLGFLKAGLAFADKITTVSPTYAREIMQPEFGMGLEGLLRARARDVSGILNGIDTDVWNPETDPALPKSYSLKGLKAKQQSRQAVLERFGLTPPDNAPLFCVISRLTTQKGVDVLLDVVPDLVARGAGLAVLGSGDRDLEAAFVAAAHRFPGAVGVIIGYDEDLSHLMQGGSDAILIPSRFEPCGLTQLYGLRYGTIPVVARTGGLADTIIDANEAALAATCATGVQFAPVTPDALSHAIDRCCDLFAERKTWSGMMRCAMRHPVGWETSSKAYLEVYDRLLGG.

K15 provides a ligand contact to ADP-alpha-D-glucose.

This sequence belongs to the glycosyltransferase 1 family. Bacterial/plant glycogen synthase subfamily.

The enzyme catalyses [(1-&gt;4)-alpha-D-glucosyl](n) + ADP-alpha-D-glucose = [(1-&gt;4)-alpha-D-glucosyl](n+1) + ADP + H(+). It participates in glycan biosynthesis; glycogen biosynthesis. Its function is as follows. Synthesizes alpha-1,4-glucan chains using ADP-glucose. This chain is Glycogen synthase, found in Roseobacter denitrificans (strain ATCC 33942 / OCh 114) (Erythrobacter sp. (strain OCh 114)).